The sequence spans 135 residues: Probable histone H2A.8 (135 aa).

It belongs to the histone H2A family. The nucleosome is a histone octamer containing two molecules each of H2A, H2B, H3 and H4 assembled in one H3-H4 heterotetramer and two H2A-H2B heterodimers. The octamer wraps approximately 147 bp of DNA.

It localises to the nucleus. The protein resides in the chromosome. In terms of biological role, core component of nucleosome. Nucleosomes wrap and compact DNA into chromatin, limiting DNA accessibility to the cellular machineries which require DNA as a template. Histones thereby play a central role in transcription regulation, DNA repair, DNA replication and chromosomal stability. DNA accessibility is regulated via a complex set of post-translational modifications of histones, also called histone code, and nucleosome remodeling. The sequence is that of Probable histone H2A.8 from Oryza sativa subsp. indica (Rice).